The sequence spans 170 residues: Peptide deformylase (170 aa).

2 residues coordinate Fe cation: C88 and H130. E131 is an active-site residue. Residue H134 participates in Fe cation binding.

It belongs to the polypeptide deformylase family. It depends on Fe(2+) as a cofactor.

It carries out the reaction N-terminal N-formyl-L-methionyl-[peptide] + H2O = N-terminal L-methionyl-[peptide] + formate. In terms of biological role, removes the formyl group from the N-terminal Met of newly synthesized proteins. Requires at least a dipeptide for an efficient rate of reaction. N-terminal L-methionine is a prerequisite for activity but the enzyme has broad specificity at other positions. The polypeptide is Peptide deformylase (Acetivibrio thermocellus (strain ATCC 27405 / DSM 1237 / JCM 9322 / NBRC 103400 / NCIMB 10682 / NRRL B-4536 / VPI 7372) (Clostridium thermocellum)).